Here is a 282-residue protein sequence, read N- to C-terminus: D-alanine aminotransferase (282 aa).

Y32 serves as a coordination point for substrate. R51 contacts pyridoxal 5'-phosphate. Substrate is bound by residues R99 and H101. K146 functions as the Proton acceptor in the catalytic mechanism. K146 is subject to N6-(pyridoxal phosphate)lysine. E178 provides a ligand contact to pyridoxal 5'-phosphate.

It belongs to the class-IV pyridoxal-phosphate-dependent aminotransferase family. In terms of assembly, homodimer. Requires pyridoxal 5'-phosphate as cofactor.

The catalysed reaction is D-alanine + 2-oxoglutarate = D-glutamate + pyruvate. Acts on the D-isomers of alanine, leucine, aspartate, glutamate, aminobutyrate, norvaline and asparagine. The enzyme transfers an amino group from a substrate D-amino acid to the pyridoxal phosphate cofactor to form pyridoxamine and an alpha-keto acid in the first half-reaction. The second half-reaction is the reverse of the first, transferring the amino group from the pyridoxamine to a second alpha-keto acid to form the product D-amino acid via a ping-pong mechanism. This is an important process in the formation of D-alanine and D-glutamate, which are essential bacterial cell wall components. The chain is D-alanine aminotransferase (dat) from Staphylococcus epidermidis (strain ATCC 35984 / DSM 28319 / BCRC 17069 / CCUG 31568 / BM 3577 / RP62A).